The following is a 217-amino-acid chain: tRNA (guanine-N(7)-)-methyltransferase (217 aa).

S-adenosyl-L-methionine contacts are provided by glutamate 43, aspartate 68, asparagine 101, and asparagine 123. Residue lysine 127 participates in substrate binding. Residues 129–134 (RHNKRR) are interaction with RNA. Substrate is bound by residues aspartate 159 and 196–199 (TEYE).

Belongs to the class I-like SAM-binding methyltransferase superfamily. TrmB family.

The catalysed reaction is guanosine(46) in tRNA + S-adenosyl-L-methionine = N(7)-methylguanosine(46) in tRNA + S-adenosyl-L-homocysteine. It participates in tRNA modification; N(7)-methylguanine-tRNA biosynthesis. Functionally, catalyzes the formation of N(7)-methylguanine at position 46 (m7G46) in tRNA. This is tRNA (guanine-N(7)-)-methyltransferase from Clostridium botulinum (strain Langeland / NCTC 10281 / Type F).